The following is a 90-amino-acid chain: DNA-binding protein HU-alpha (90 aa).

The protein belongs to the bacterial histone-like protein family. As to quaternary structure, heterodimer of an alpha and a beta chain.

Functionally, histone-like DNA-binding protein which is capable of wrapping DNA to stabilize it, and thus to prevent its denaturation under extreme environmental conditions. The polypeptide is DNA-binding protein HU-alpha (hupA) (Salmonella typhi).